A 116-amino-acid polypeptide reads, in one-letter code: Large ribosomal subunit protein bL19 (116 aa).

It belongs to the bacterial ribosomal protein bL19 family.

This protein is located at the 30S-50S ribosomal subunit interface and may play a role in the structure and function of the aminoacyl-tRNA binding site. This chain is Large ribosomal subunit protein bL19, found in Staphylococcus aureus (strain Mu3 / ATCC 700698).